The primary structure comprises 228 residues: Urease accessory protein UreF (228 aa).

It belongs to the UreF family. In terms of assembly, ureD, UreF and UreG form a complex that acts as a GTP-hydrolysis-dependent molecular chaperone, activating the urease apoprotein by helping to assemble the nickel containing metallocenter of UreC. The UreE protein probably delivers the nickel.

The protein resides in the cytoplasm. In terms of biological role, required for maturation of urease via the functional incorporation of the urease nickel metallocenter. This chain is Urease accessory protein UreF, found in Lachnoclostridium phytofermentans (strain ATCC 700394 / DSM 18823 / ISDg) (Clostridium phytofermentans).